Here is a 364-residue protein sequence, read N- to C-terminus: 4-hydroxythreonine-4-phosphate dehydrogenase (364 aa).

H148 and T149 together coordinate substrate. A divalent metal cation is bound by residues H177, H216, and H301. Substrate-binding residues include K309, N318, and R327.

It belongs to the PdxA family. In terms of assembly, homodimer. Zn(2+) is required as a cofactor. Mg(2+) serves as cofactor. It depends on Co(2+) as a cofactor.

Its subcellular location is the cytoplasm. The enzyme catalyses 4-(phosphooxy)-L-threonine + NAD(+) = 3-amino-2-oxopropyl phosphate + CO2 + NADH. It participates in cofactor biosynthesis; pyridoxine 5'-phosphate biosynthesis; pyridoxine 5'-phosphate from D-erythrose 4-phosphate: step 4/5. Its function is as follows. Catalyzes the NAD(P)-dependent oxidation of 4-(phosphooxy)-L-threonine (HTP) into 2-amino-3-oxo-4-(phosphooxy)butyric acid which spontaneously decarboxylates to form 3-amino-2-oxopropyl phosphate (AHAP). This chain is 4-hydroxythreonine-4-phosphate dehydrogenase, found in Campylobacter jejuni subsp. jejuni serotype O:23/36 (strain 81-176).